Reading from the N-terminus, the 478-residue chain is Probable glycine dehydrogenase (decarboxylating) subunit 2 (478 aa).

Lysine 264 is modified (N6-(pyridoxal phosphate)lysine).

This sequence belongs to the GcvP family. C-terminal subunit subfamily. In terms of assembly, the glycine cleavage system is composed of four proteins: P, T, L and H. In this organism, the P 'protein' is a heterodimer of two subunits. It depends on pyridoxal 5'-phosphate as a cofactor.

It catalyses the reaction N(6)-[(R)-lipoyl]-L-lysyl-[glycine-cleavage complex H protein] + glycine + H(+) = N(6)-[(R)-S(8)-aminomethyldihydrolipoyl]-L-lysyl-[glycine-cleavage complex H protein] + CO2. Functionally, the glycine cleavage system catalyzes the degradation of glycine. The P protein binds the alpha-amino group of glycine through its pyridoxal phosphate cofactor; CO(2) is released and the remaining methylamine moiety is then transferred to the lipoamide cofactor of the H protein. The polypeptide is Probable glycine dehydrogenase (decarboxylating) subunit 2 (Endomicrobium trichonymphae).